The primary structure comprises 162 residues: Xanthine phosphoribosyltransferase (162 aa).

2 residues coordinate xanthine: Leu5 and Thr12. Residue 113-117 coordinates 5-phospho-alpha-D-ribose 1-diphosphate; sequence ANGQA. Lys141 is a xanthine binding site.

This sequence belongs to the purine/pyrimidine phosphoribosyltransferase family. Xpt subfamily. Homodimer.

It localises to the cytoplasm. The catalysed reaction is XMP + diphosphate = xanthine + 5-phospho-alpha-D-ribose 1-diphosphate. Its pathway is purine metabolism; XMP biosynthesis via salvage pathway; XMP from xanthine: step 1/1. Converts the preformed base xanthine, a product of nucleic acid breakdown, to xanthosine 5'-monophosphate (XMP), so it can be reused for RNA or DNA synthesis. The protein is Xanthine phosphoribosyltransferase (xpt) of Streptococcus mitis.